The following is a 199-amino-acid chain: Large ribosomal subunit protein eL13B (199 aa).

T144 and T152 each carry phosphothreonine.

It belongs to the eukaryotic ribosomal protein eL13 family. In terms of assembly, component of the large ribosomal subunit (LSU). Mature yeast ribosomes consist of a small (40S) and a large (60S) subunit. The 40S small subunit contains 1 molecule of ribosomal RNA (18S rRNA) and 33 different proteins (encoded by 57 genes). The large 60S subunit contains 3 rRNA molecules (25S, 5.8S and 5S rRNA) and 46 different proteins (encoded by 81 genes).

The protein resides in the cytoplasm. In terms of biological role, component of the ribosome, a large ribonucleoprotein complex responsible for the synthesis of proteins in the cell. The small ribosomal subunit (SSU) binds messenger RNAs (mRNAs) and translates the encoded message by selecting cognate aminoacyl-transfer RNA (tRNA) molecules. The large subunit (LSU) contains the ribosomal catalytic site termed the peptidyl transferase center (PTC), which catalyzes the formation of peptide bonds, thereby polymerizing the amino acids delivered by tRNAs into a polypeptide chain. The nascent polypeptides leave the ribosome through a tunnel in the LSU and interact with protein factors that function in enzymatic processing, targeting, and the membrane insertion of nascent chains at the exit of the ribosomal tunnel. This is Large ribosomal subunit protein eL13B from Saccharomyces cerevisiae (strain ATCC 204508 / S288c) (Baker's yeast).